The sequence spans 35 residues: Photosystem II reaction center protein M (35 aa).

The chain crosses the membrane as a helical span at residues 5 to 25; it reads ILAFIATALFILVPTAFLLII.

The protein belongs to the PsbM family. In terms of assembly, PSII is composed of 1 copy each of membrane proteins PsbA, PsbB, PsbC, PsbD, PsbE, PsbF, PsbH, PsbI, PsbJ, PsbK, PsbL, PsbM, PsbT, PsbX, PsbY, PsbZ, Psb30/Ycf12, at least 3 peripheral proteins of the oxygen-evolving complex and a large number of cofactors. It forms dimeric complexes.

It is found in the plastid. It localises to the chloroplast thylakoid membrane. One of the components of the core complex of photosystem II (PSII). PSII is a light-driven water:plastoquinone oxidoreductase that uses light energy to abstract electrons from H(2)O, generating O(2) and a proton gradient subsequently used for ATP formation. It consists of a core antenna complex that captures photons, and an electron transfer chain that converts photonic excitation into a charge separation. This subunit is found at the monomer-monomer interface. The sequence is that of Photosystem II reaction center protein M from Panax quinquefolius (American ginseng).